The chain runs to 63 residues: Overexpressed in colon carcinoma 1 protein homolog (63 aa).

Residues 1–12 (MGCGNSTAASAG) show a composition bias toward low complexity. The interval 1–40 (MGCGNSTAASAGAGQGPAGAAKDVTEESITEDDKRRNYGG) is disordered.

It belongs to the OCC1 family.

The protein is Overexpressed in colon carcinoma 1 protein homolog of Bos taurus (Bovine).